A 486-amino-acid chain; its full sequence is Aspartyl/glutamyl-tRNA(Asn/Gln) amidotransferase subunit B (486 aa).

This sequence belongs to the GatB/GatE family. GatB subfamily. Heterotrimer of A, B and C subunits.

It carries out the reaction L-glutamyl-tRNA(Gln) + L-glutamine + ATP + H2O = L-glutaminyl-tRNA(Gln) + L-glutamate + ADP + phosphate + H(+). The catalysed reaction is L-aspartyl-tRNA(Asn) + L-glutamine + ATP + H2O = L-asparaginyl-tRNA(Asn) + L-glutamate + ADP + phosphate + 2 H(+). In terms of biological role, allows the formation of correctly charged Asn-tRNA(Asn) or Gln-tRNA(Gln) through the transamidation of misacylated Asp-tRNA(Asn) or Glu-tRNA(Gln) in organisms which lack either or both of asparaginyl-tRNA or glutaminyl-tRNA synthetases. The reaction takes place in the presence of glutamine and ATP through an activated phospho-Asp-tRNA(Asn) or phospho-Glu-tRNA(Gln). The chain is Aspartyl/glutamyl-tRNA(Asn/Gln) amidotransferase subunit B from Orientia tsutsugamushi (strain Ikeda) (Rickettsia tsutsugamushi).